The sequence spans 130 residues: Small ribosomal subunit protein bS16 (130 aa).

The segment covering 98 to 109 (AAAKQAAKDAAE) has biased composition (basic and acidic residues). Positions 98 to 130 (AAAKQAAKDAAEAKAAAAAEAEAPAADAEASEG) are disordered. Over residues 110 to 130 (AKAAAAAEAEAPAADAEASEG) the composition is skewed to low complexity.

This sequence belongs to the bacterial ribosomal protein bS16 family.

The sequence is that of Small ribosomal subunit protein bS16 from Synechococcus sp. (strain CC9902).